Reading from the N-terminus, the 433-residue chain is Zinc carboxypeptidase A 1 (433 aa).

The signal sequence occupies residues 1–28 (MVRLNSAAGSRWWAPAMAILAVALSVEA). In terms of domain architecture, Peptidase M14 spans 130–423 (DYHTLEEIHA…DSLITLLEES (294 aa)). Positions 187 and 190 each coordinate Zn(2+). Cys-253 and Cys-276 form a disulfide bridge. Position 312 (His-312) interacts with Zn(2+). Catalysis depends on Glu-387, which acts as the Proton donor/acceptor.

It belongs to the peptidase M14 family. Zn(2+) serves as cofactor. In terms of tissue distribution, expressed in the posterior midgut in pupae and female adults.

The protein resides in the secreted. Involved in the digestion of the blood meal. In Anopheles gambiae (African malaria mosquito), this protein is Zinc carboxypeptidase A 1.